The following is a 278-amino-acid chain: HTH-type transcriptional activator RhaS (278 aa).

The HTH araC/xylS-type domain maps to 174 to 272 (NQLMAWLEDH…NWSPRDIRQG (99 aa)). DNA-binding regions (H-T-H motif) lie at residues 191 to 212 (EAVA…KQHT) and 239 to 262 (VTEI…RREF).

As to quaternary structure, binds DNA as a dimer.

Its subcellular location is the cytoplasm. Activates expression of the rhaBAD and rhaT operons. This Salmonella heidelberg (strain SL476) protein is HTH-type transcriptional activator RhaS.